The following is a 217-amino-acid chain: 3-isopropylmalate dehydratase small subunit (217 aa).

Belongs to the LeuD family. LeuD type 1 subfamily. Heterodimer of LeuC and LeuD.

It catalyses the reaction (2R,3S)-3-isopropylmalate = (2S)-2-isopropylmalate. The protein operates within amino-acid biosynthesis; L-leucine biosynthesis; L-leucine from 3-methyl-2-oxobutanoate: step 2/4. Functionally, catalyzes the isomerization between 2-isopropylmalate and 3-isopropylmalate, via the formation of 2-isopropylmaleate. This is 3-isopropylmalate dehydratase small subunit from Paracidovorax citrulli (strain AAC00-1) (Acidovorax citrulli).